Here is a 517-residue protein sequence, read N- to C-terminus: Ammonium transporter 3 (517 aa).

Residues 1-32 are Extracellular-facing; that stretch reads MLNEPNALLRRDANSTIATVTELFPNEYSNAD. A helical transmembrane segment spans residues 33–53; sequence IAYVLLSTVVVFTVTPGIALY. The Cytoplasmic segment spans residues 54–69; sequence YAGMVRKNSALSILTQ. A helical transmembrane segment spans residues 70 to 90; sequence SFLVTAVVFIQWYLFGYSLAC. The Extracellular portion of the chain corresponds to 91 to 118; it reads SSGSSFYGTLWQGGMNHLWLEPYIPGST. A helical transmembrane segment spans residues 119 to 139; the sequence is IPAIVYFPFGGLFAVATAQLF. Residues 140–148 lie on the Cytoplasmic side of the membrane; sequence AGAMAERGR. Residues 149 to 169 traverse the membrane as a helical segment; that stretch reads LIPSLVISFLYITLVYCPQAY. Residues 170 to 180 lie on the Extracellular side of the membrane; that stretch reads WTWAPNGWLYT. Residues 181-201 traverse the membrane as a helical segment; the sequence is LGALDFAGGGPVHISSGFAAL. Residues 202 to 272 are Cytoplasmic-facing; sequence AYSLCLGRRI…AHNPPHDAGM (71 aa). The chain crosses the membrane as a helical span at residues 273-293; it reads VYIGVVLIWFAWLCFNSGTLL. The Extracellular segment spans residues 294 to 299; the sequence is TVNIRT. A helical transmembrane segment spans residues 300–320; sequence AYIMTNTLISSSFGALTWAII. Over 321–327 the chain is Cytoplasmic; it reads DYIRYRK. Residues 328–348 form a helical membrane-spanning segment; that stretch reads FSTIGICEGAIAGLVGITPAC. A topological domain (extracellular) is located at residue glycine 349. The chain crosses the membrane as a helical span at residues 350–370; it reads FVFPWGAAAGGIVPALVCNFL. Topologically, residues 371–384 are cytoplasmic; the sequence is HDLNEWIGVDETLR. A helical membrane pass occupies residues 385–405; it reads VFNLHGIGGIVGSIVLGVVAH. Residues 406–432 lie on the Extracellular side of the membrane; it reads PDVAASDGATVIDGGWAVHHWKQMGYQ. The chain crosses the membrane as a helical span at residues 433 to 453; sequence FAGFTSVAAWSFVITAIICLL. Residues 454–517 lie on the Cytoplasmic side of the membrane; sequence VDLVPGLHIR…NIKQEKQDEF (64 aa).

This sequence belongs to the ammonia transporter channel (TC 1.A.11.2) family.

It localises to the membrane. Transporter for ammonium to use as a nitrogen source. The chain is Ammonium transporter 3 (amt3) from Schizosaccharomyces pombe (strain 972 / ATCC 24843) (Fission yeast).